A 1118-amino-acid polypeptide reads, in one-letter code: Protein translocase subunit SecA (1118 aa).

Residues Gln176, Gly194 to Thr198, and Asp693 contribute to the ATP site. Positions Gln1034–Gly1056 are disordered.

Belongs to the SecA family. As to quaternary structure, monomer and homodimer. Part of the essential Sec protein translocation apparatus which comprises SecA, SecYEG and auxiliary proteins SecDF. Other proteins may also be involved.

It is found in the cell inner membrane. Its subcellular location is the cytoplasm. The enzyme catalyses ATP + H2O + cellular proteinSide 1 = ADP + phosphate + cellular proteinSide 2.. Its function is as follows. Part of the Sec protein translocase complex. Interacts with the SecYEG preprotein conducting channel. Has a central role in coupling the hydrolysis of ATP to the transfer of proteins into and across the cell membrane, serving as an ATP-driven molecular motor driving the stepwise translocation of polypeptide chains across the membrane. The chain is Protein translocase subunit SecA from Cytophaga hutchinsonii (strain ATCC 33406 / DSM 1761 / CIP 103989 / NBRC 15051 / NCIMB 9469 / D465).